A 4545-amino-acid chain; its full sequence is Prolow-density lipoprotein receptor-related protein 1 (4545 aa).

A signal peptide spans 1 to 19; that stretch reads MLTPPLLLLLPLLSALVSG. Over 20-4424 the chain is Extracellular; that stretch reads ATMDAPKTCS…SQQQPGHMAS (4405 aa). LDL-receptor class A domains are found at residues 26–67 and 71–111; these read KTCS…ICPQ and QRCP…HCRE. 6 disulfides stabilise this stretch: cysteine 28/cysteine 41, cysteine 35/cysteine 54, cysteine 48/cysteine 65, cysteine 73/cysteine 86, cysteine 80/cysteine 99, and cysteine 93/cysteine 109. The 39-residue stretch at 112–150 folds into the EGF-like 1 domain; sequence LRANCSRMGCQHHCVPTPSGPTCYCNSSFQLQADGKTCK. The N-linked (GlcNAc...) asparagine glycan is linked to asparagine 115. 6 disulfides stabilise this stretch: cysteine 116/cysteine 125, cysteine 121/cysteine 134, cysteine 136/cysteine 149, cysteine 155/cysteine 165, cysteine 161/cysteine 174, and cysteine 176/cysteine 189. Asparagine 137 is a glycosylation site (N-linked (GlcNAc...) asparagine). In terms of domain architecture, EGF-like 2; calcium-binding spans 151–190; the sequence is DFDECSVYGTCSQLCTNTDGSFTCGCVEGYLLQPDNRSCK. Asparagine 186, asparagine 240, and asparagine 275 each carry an N-linked (GlcNAc...) asparagine glycan. LDL-receptor class B repeat units lie at residues 293 to 335, 336 to 379, and 380 to 423; these read GNFY…DPAM, GKVF…DLVS, and RLVY…FENY. Residue asparagine 358 is glycosylated (N-linked (GlcNAc...) asparagine). Residue asparagine 447 is glycosylated (N-linked (GlcNAc...) asparagine). One can recognise an EGF-like 3 domain in the interval 475–521; the sequence is RSHACENDQYGKPGGCSDICLLANSHKARTCRCRSGFSLGSDGKSCK. Disulfide bonds link cysteine 479–cysteine 494, cysteine 490–cysteine 505, and cysteine 507–cysteine 520. LDL-receptor class B repeat units lie at residues 572–614, 615–660, 661–711, and 712–755; these read GFIY…DWMG, DNLY…DPLN, GWMY…DIPA, and GRLY…HGNY. A glycan (N-linked (GlcNAc...) asparagine) is linked at asparagine 730. One can recognise an EGF-like 4 domain in the interval 804–844; sequence GTNKCRVNNGGCSSLCLATPGSRQCACAEDQVLDTDGVTCL. 33 disulfides stabilise this stretch: cysteine 808-cysteine 819, cysteine 815-cysteine 828, cysteine 830-cysteine 843, cysteine 855-cysteine 867, cysteine 862-cysteine 880, cysteine 874-cysteine 891, cysteine 896-cysteine 908, cysteine 903-cysteine 921, cysteine 915-cysteine 932, cysteine 937-cysteine 949, cysteine 944-cysteine 962, cysteine 956-cysteine 972, cysteine 977-cysteine 990, cysteine 985-cysteine 1003, cysteine 997-cysteine 1012, cysteine 1016-cysteine 1028, cysteine 1023-cysteine 1041, cysteine 1035-cysteine 1052, cysteine 1063-cysteine 1076, cysteine 1070-cysteine 1089, cysteine 1083-cysteine 1098, cysteine 1105-cysteine 1119, cysteine 1113-cysteine 1132, cysteine 1126-cysteine 1141, cysteine 1146-cysteine 1160, cysteine 1153-cysteine 1173, cysteine 1167-cysteine 1183, cysteine 1186-cysteine 1197, cysteine 1193-cysteine 1207, cysteine 1209-cysteine 1222, cysteine 1228-cysteine 1238, cysteine 1234-cysteine 1247, and cysteine 1249-cysteine 1262. LDL-receptor class A domains are found at residues 853–893, 894–934, 935–974, 975–1014, 1014–1054, 1061–1100, 1103–1143, and 1144–1183; these read PQCQ…LCHQ, HTCP…TCSA, RTCP…SCAY, PTCF…GCSH, HSCS…NCTN, GGCH…SCEG, HVCD…NCEA, and LACR…GELC. Residues tryptophan 872, aspartate 875, aspartate 877, aspartate 879, aspartate 885, and glutamate 886 each coordinate Ca(2+). N-linked (GlcNAc...) asparagine glycosylation is present at asparagine 929. Ca(2+) is bound by residues tryptophan 1033, aspartate 1036, aspartate 1038, aspartate 1040, aspartate 1046, and glutamate 1047. N-linked (GlcNAc...) asparagine glycosylation occurs at asparagine 1051. Ca(2+) is bound by residues tryptophan 1081, aspartate 1084, aspartate 1086, aspartate 1088, aspartate 1094, and glutamate 1095. Residues asparagine 1155 and asparagine 1156 are each glycosylated (N-linked (GlcNAc...) asparagine). EGF-like domains follow at residues 1184–1223 and 1224–1263; these read DQCS…HTCQ and IQSY…ESCR. Residues asparagine 1196 and asparagine 1219 are each glycosylated (N-linked (GlcNAc...) asparagine). 5 LDL-receptor class B repeats span residues 1310–1356, 1357–1399, 1400–1446, 1447–1491, and 1492–1532; these read SALY…DWIA, GNIY…DPRD, GILF…DYLE, KRIL…YGGE, and VYWT…YHPS. N-linked (GlcNAc...) asparagine glycosylation occurs at asparagine 1512. In terms of domain architecture, EGF-like 7 spans 1537-1580; sequence APNPCEANGGRGPCSHLCLINYNRTVSCACPHLMKLHKDNTTCY. 3 disulfides stabilise this stretch: cysteine 1541–cysteine 1554, cysteine 1550–cysteine 1564, and cysteine 1566–cysteine 1579. Asparagine 1559, asparagine 1576, asparagine 1617, and asparagine 1646 each carry an N-linked (GlcNAc...) asparagine glycan. 4 LDL-receptor class B repeats span residues 1628 to 1670, 1671 to 1714, 1715 to 1754, and 1755 to 1799; these read QRVY…DWVS, RNLF…HPLR, GKLY…DFPE, and SKLY…MGDK. N-linked (GlcNAc...) asparagine glycans are attached at residues asparagine 1724, asparagine 1734, asparagine 1764, and asparagine 1826. In terms of domain architecture, EGF-like 8 spans 1847–1888; it reads GTNPCSVNNGDCSQLCLPTSETTRSCMCTAGYSLRSGQQACE. 3 disulfides stabilise this stretch: cysteine 1851-cysteine 1862, cysteine 1858-cysteine 1872, and cysteine 1874-cysteine 1887. N-linked (GlcNAc...) asparagine glycosylation occurs at asparagine 1934. LDL-receptor class B repeat units follow at residues 1935 to 1977, 1978 to 2020, 2021 to 2064, and 2065 to 2108; these read DTIY…DWIA, GNIY…HPEK, GYLF…DYQG, and GKLY…FEDF. Residue asparagine 1996 is glycosylated (N-linked (GlcNAc...) asparagine). Lysine 2010 bears the N6-acetyllysine mark. Asparagine 2049 is a glycosylation site (N-linked (GlcNAc...) asparagine). 2 N-linked (GlcNAc...) asparagine glycosylation sites follow: asparagine 2118 and asparagine 2128. Residues 2156–2196 form the EGF-like 9 domain; it reads GTNVCAVANGGCQQLCLYRGGGQRACACAHGMLAEDGASCR. 3 disulfide bridges follow: cysteine 2160-cysteine 2171, cysteine 2167-cysteine 2181, and cysteine 2183-cysteine 2195. LDL-receptor class B repeat units follow at residues 2254 to 2295, 2296 to 2344, 2345 to 2389, 2390 to 2432, and 2433 to 2474; these read NRIF…HRGW, DTLY…DECQ, NLMF…DHRA, EKLY…YGEH, and IFWT…VAND. Asparagine 2473 carries an N-linked (GlcNAc...) asparagine glycan. The EGF-like 10 domain maps to 2479–2519; it reads ELSPCRINNGGCQDLCLLTHQGHVNCSCRGGRILQEDFTCR. Disulfide bonds link cysteine 2483-cysteine 2494, cysteine 2490-cysteine 2504, and cysteine 2506-cysteine 2518. An N-linked (GlcNAc...) asparagine glycan is attached at asparagine 2503. A glycan (N-linked (GlcNAc...) asparagine) is linked at asparagine 2522. 7 LDL-receptor class A domains span residues 2523–2564, 2565–2603, 2604–2642, 2643–2691, 2695–2733, 2733–2772, and 2773–2815; these read SSCR…YCNS, RRCK…PCNK, TACG…NCSA, TDCS…DCPG, PRCP…HCNK, KFCS…HCEG, and KTCG…GCLY. 6 cysteine pairs are disulfide-bonded: cysteine 2525/cysteine 2538, cysteine 2533/cysteine 2551, cysteine 2545/cysteine 2562, cysteine 2567/cysteine 2579, cysteine 2574/cysteine 2592, and cysteine 2586/cysteine 2601. N-linked (GlcNAc...) asparagine glycosylation is present at asparagine 2602. 15 cysteine pairs are disulfide-bonded: cysteine 2606–cysteine 2618, cysteine 2613–cysteine 2631, cysteine 2625–cysteine 2640, cysteine 2645–cysteine 2667, cysteine 2661–cysteine 2680, cysteine 2674–cysteine 2689, cysteine 2697–cysteine 2709, cysteine 2704–cysteine 2722, cysteine 2716–cysteine 2731, cysteine 2735–cysteine 2747, cysteine 2742–cysteine 2760, cysteine 2754–cysteine 2770, cysteine 2775–cysteine 2788, cysteine 2782–cysteine 2801, and cysteine 2795–cysteine 2813. N-linked (GlcNAc...) asparagine glycosylation is found at asparagine 2621 and asparagine 2639. N-linked (GlcNAc...) asparagine glycosylation occurs at asparagine 2816. 3 LDL-receptor class A domains span residues 2817–2856, 2857–2900, and 2903–2941; these read STCD…ECEY, PTCG…HCTS, and HKCN…RGCH. Disulfide bonds link cysteine 2819/cysteine 2831, cysteine 2826/cysteine 2844, cysteine 2838/cysteine 2854, cysteine 2859/cysteine 2871, cysteine 2866/cysteine 2885, cysteine 2879/cysteine 2898, cysteine 2905/cysteine 2918, cysteine 2913/cysteine 2931, cysteine 2925/cysteine 2940, cysteine 2945/cysteine 2957, cysteine 2953/cysteine 2966, cysteine 2968/cysteine 2981, cysteine 2987/cysteine 2997, cysteine 2993/cysteine 3006, and cysteine 3008/cysteine 3022. Asparagine 2906 carries N-linked (GlcNAc...) asparagine glycosylation. The 41-residue stretch at 2942–2982 folds into the EGF-like 11 domain; that stretch reads VNECLSRKLSGCSQDCEDLKIGFKCRCRPGFRLKDDGRTCA. One can recognise an EGF-like 12; calcium-binding domain in the interval 2983–3023; it reads DLDECSTTFPCSQLCINTHGSYKCLCVEGYAPRGGDPHSCK. Asparagine 3049 and asparagine 3090 each carry an N-linked (GlcNAc...) asparagine glycan. 5 LDL-receptor class B repeats span residues 3070 to 3114, 3115 to 3157, 3158 to 3201, 3202 to 3244, and 3245 to 3285; these read QMIY…DWVG, GNLY…DVQN, GYLY…DYVT, ERIY…FEDY, and VYWT…FHAL. An N-linked (GlcNAc...) asparagine glycan is attached at asparagine 3265. The region spanning 3291–3332 is the EGF-like 13 domain; it reads PNHPCKVNNGGCSNLCLLSPGGGHKCACPTNFYLGGDGRTCV. 3 disulfide bridges follow: cysteine 3295-cysteine 3306, cysteine 3302-cysteine 3316, and cysteine 3318-cysteine 3331. LDL-receptor class A domains follow at residues 3333–3372, 3373–3411, 3412–3451, 3452–3492, 3493–3534, 3535–3573, 3574–3612, 3612–3650, 3653–3693, 3694–3734, and 3740–3779; these read SNCT…DCPE, FKCR…NCDI, HVCL…DCPE, VTCA…NCTQ, MTCG…ECDE, RTCE…SCTP, RPCS…DCTP, PRCD…ACGT, RTCP…ECAR, FICP…DCEP, and PHCK…DCSI. A glycan (N-linked (GlcNAc...) asparagine) is linked at asparagine 3334. 39 disulfide bridges follow: cysteine 3335/cysteine 3347, cysteine 3342/cysteine 3360, cysteine 3354/cysteine 3370, cysteine 3375/cysteine 3387, cysteine 3382/cysteine 3400, cysteine 3394/cysteine 3409, cysteine 3414/cysteine 3427, cysteine 3421/cysteine 3440, cysteine 3434/cysteine 3449, cysteine 3454/cysteine 3467, cysteine 3461/cysteine 3480, cysteine 3474/cysteine 3490, cysteine 3495/cysteine 3508, cysteine 3502/cysteine 3521, cysteine 3515/cysteine 3532, cysteine 3537/cysteine 3549, cysteine 3544/cysteine 3562, cysteine 3556/cysteine 3571, cysteine 3576/cysteine 3588, cysteine 3583/cysteine 3601, cysteine 3595/cysteine 3610, cysteine 3614/cysteine 3626, cysteine 3621/cysteine 3639, cysteine 3633/cysteine 3648, cysteine 3655/cysteine 3667, cysteine 3662/cysteine 3680, cysteine 3674/cysteine 3691, cysteine 3696/cysteine 3710, cysteine 3704/cysteine 3723, cysteine 3717/cysteine 3732, cysteine 3742/cysteine 3755, cysteine 3750/cysteine 3768, cysteine 3762/cysteine 3777, cysteine 3786/cysteine 3799, cysteine 3793/cysteine 3808, cysteine 3810/cysteine 3823, cysteine 3829/cysteine 3839, cysteine 3835/cysteine 3848, and cysteine 3850/cysteine 3861. An N-linked (GlcNAc...) asparagine glycan is attached at asparagine 3489. Asparagine 3663 carries N-linked (GlcNAc...) asparagine glycosylation. EGF-like domains lie at 3782-3824 and 3825-3862; these read KLTS…PGCQ and DINE…NTCK. Residue asparagine 3789 is glycosylated (N-linked (GlcNAc...) asparagine). A glycan (N-linked (GlcNAc...) asparagine) is linked at asparagine 3840. 4 LDL-receptor class B repeats span residues 3913 to 3955, 3971 to 4013, 4014 to 4057, and 4058 to 4102; these read GRVY…HLNI, GNVY…DPLR, GTMY…DYHN, and ERLY…FEDY. Positions 3941–3944 match the Recognition site for proteolytical processing motif; sequence RHRR. A glycan (N-linked (GlcNAc...) asparagine) is linked at asparagine 3954. 2 N-linked (GlcNAc...) asparagine glycosylation sites follow: asparagine 4076 and asparagine 4126. EGF-like domains are found at residues 4148 to 4184, 4197 to 4233, 4233 to 4269, 4269 to 4305, 4305 to 4341, 4341 to 4376, and 4374 to 4410; these read VTNP…GTCV, RPGT…DKCE, ELDQ…PKCT, TAQV…DRCQ, QYRQ…PRCE, EVNK…PSCL, and SCLT…PRCE. 17 disulfides stabilise this stretch: cysteine 4152/cysteine 4161, cysteine 4157/cysteine 4170, cysteine 4172/cysteine 4183, cysteine 4201/cysteine 4211, cysteine 4205/cysteine 4221, cysteine 4223/cysteine 4232, cysteine 4237/cysteine 4247, cysteine 4241/cysteine 4257, cysteine 4259/cysteine 4268, cysteine 4273/cysteine 4283, cysteine 4277/cysteine 4293, cysteine 4295/cysteine 4304, cysteine 4309/cysteine 4319, cysteine 4313/cysteine 4329, cysteine 4331/cysteine 4340, cysteine 4345/cysteine 4353, and cysteine 4348/cysteine 4364. The N-linked (GlcNAc...) asparagine glycan is linked to asparagine 4180. N-linked (GlcNAc...) asparagine glycans are attached at residues asparagine 4279 and asparagine 4280. N-linked (GlcNAc...) asparagine glycosylation is present at asparagine 4365. Cystine bridges form between cysteine 4366–cysteine 4375, cysteine 4378–cysteine 4388, cysteine 4382–cysteine 4398, and cysteine 4400–cysteine 4409. The chain crosses the membrane as a helical span at residues 4425–4445; it reads ILIPLLLLLLLLLVAGVVFWY. The Cytoplasmic portion of the chain corresponds to 4446-4545; sequence KRRVRGAKGF…PEDEIGDPLA (100 aa). Residues 4446–4545 are interaction with MAFB; the sequence is KRRVRGAKGF…PEDEIGDPLA (100 aa). Threonine 4461 is modified (phosphothreonine). An NPXY motif motif is present at residues 4503–4508; that stretch reads FTNPVY. A Phosphotyrosine modification is found at tyrosine 4508. A phosphoserine mark is found at serine 4518, serine 4521, and serine 4524.

This sequence belongs to the LDLR family. Heterodimer of an 85-kDa membrane-bound carboxyl subunit and a non-covalently attached 515-kDa N-terminal subunit. Intracellular domain interacts with MAFB. Found in a complex with PID1/PCLI1, LRP1 and CUBNI. Interacts with SNX17, PID1/PCLI1, PDGF and CUBN. The intracellular domain interacts with SHC1, GULP1 and DAB1. Can weakly interact (via NPXY motif) with DAB2 (via PID domain); the interaction is enhanced by tyrosine phosphorylation of the NPXY motif. Interacts with MDK; promotes neuronal survival. Interacts with LRPAP1; this interaction is followed by rapid internalization. Interacts with uPA/PLAU and PAI1/SERPINE1, either individually or in complex with each other, leading to rapid endocytosis; this interaction is abolished in the presence of LRPAP1/RAP. Also interacts with tPA/PLAT alone or in complex with SERPINE1. Interacts with the urokinase receptor PLAUR; this interaction leads to PLAUR internalization and is impaired in the presence of SORL1. Interacts with PDGFB. Interacts with TAU/MAPT, leading to endocytosis; this interaction is reduced in the presence of LRPAP1/RAP. Interacts with IGFBP3. Interacts with ADGRG6. In terms of processing, phosphorylated on serine and threonine residues. Phosphorylated on tyrosine residues upon stimulation with PDGF. Tyrosine phosphorylation promotes interaction with SHC1. Post-translationally, cleaved into a 85 kDa membrane-spanning subunit (LRP-85) and a 515 kDa large extracellular domain (LRP-515) that remains non-covalently associated. Gamma-secretase-dependent cleavage of LRP-85 releases the intracellular domain from the membrane.

It localises to the cell membrane. Its subcellular location is the membrane. The protein localises to the coated pit. The protein resides in the golgi outpost. It is found in the cytoplasm. It localises to the cytoskeleton. Its subcellular location is the microtubule organizing center. The protein localises to the nucleus. Functionally, endocytic receptor involved in endocytosis and in phagocytosis of apoptotic cells. Required for early embryonic development. Involved in cellular lipid homeostasis. Involved in the plasma clearance of chylomicron remnants and activated LRPAP1 (alpha 2-macroglobulin), as well as the local metabolism of complexes between plasminogen activators and their endogenous inhibitors. Acts as an alpha-2-macroglobulin receptor. Acts as a TAU/MAPT receptor and controls the endocytosis of TAU/MAPT as well as its subsequent spread. May modulate cellular events, such as APP metabolism, kinase-dependent intracellular signaling, neuronal calcium signaling as well as neurotransmission. Also acts as a receptor for IGFBP3 to mediate cell growth inhibition. (Microbial infection) Functions as a receptor for Vibrio cholerae cholix toxin and for Pseudomonas aeruginosa exotoxin A. The sequence is that of Prolow-density lipoprotein receptor-related protein 1 from Mus musculus (Mouse).